Here is a 308-residue protein sequence, read N- to C-terminus: MVGLKPPEVPPTTAVKLLGAGTAACFADLLTFPLDTAKVRLQIQGENQAARSAQYRGVLGTILTMVRNEGPRSPYNGLVAGLQRQMSFASIRIGLYDSVKQLYTPKGSDHSSITTRILAGCTTGAMAVTCAQPTDVVKVRFQASIHAGPRSNRKYSGTMDAYRTIAREEGVRGLWKGILPNITRNAIVNCAEMVTYDVIKEKVLDYHLLTDNLPCHFVSAFGAGFCATVVASPVDVVKTRYMNSPPGQYQNPLDCMLKMVTQEGPTAFYKGFTPSFLRLGSWNVVMFVSYEQLKRALMKVQMLRESPF.

Residues 1 to 10 are Mitochondrial intermembrane-facing; that stretch reads MVGLKPPEVP. A helical membrane pass occupies residues 11-32; sequence PTTAVKLLGAGTAACFADLLTF. Solcar repeat units lie at residues 11-102, 111-202, and 211-296; these read PTTA…VKQL, SSIT…IKEK, and DNLP…LKRA. At 33 to 73 the chain is on the mitochondrial matrix side; sequence PLDTAKVRLQIQGENQAARSAQYRGVLGTILTMVRNEGPRS. Residues 74–96 traverse the membrane as a helical segment; it reads PYNGLVAGLQRQMSFASIRIGLY. Residues 97–116 are Mitochondrial intermembrane-facing; the sequence is DSVKQLYTPKGSDHSSITTR. Residues 117-133 traverse the membrane as a helical segment; the sequence is ILAGCTTGAMAVTCAQP. At 134–179 the chain is on the mitochondrial matrix side; it reads TDVVKVRFQASIHAGPRSNRKYSGTMDAYRTIAREEGVRGLWKGIL. A helical membrane pass occupies residues 180-196; it reads PNITRNAIVNCAEMVTY. The Mitochondrial intermembrane segment spans residues 197-213; that stretch reads DVIKEKVLDYHLLTDNL. The helical transmembrane segment at 214–233 threads the bilayer; sequence PCHFVSAFGAGFCATVVASP. At 234-267 the chain is on the mitochondrial matrix side; it reads VDVVKTRYMNSPPGQYQNPLDCMLKMVTQEGPTA. The chain crosses the membrane as a helical span at residues 268 to 290; it reads FYKGFTPSFLRLGSWNVVMFVSY. Residues 275–297 form a purine nucleotide binding region; the sequence is SFLRLGSWNVVMFVSYEQLKRAL. The Mitochondrial intermembrane portion of the chain corresponds to 291–308; it reads EQLKRALMKVQMLRESPF.

This sequence belongs to the mitochondrial carrier (TC 2.A.29) family. In terms of assembly, interacts with HAX1; the interaction is direct and calcium-dependent.

It is found in the mitochondrion inner membrane. In terms of biological role, putative transmembrane transporter that plays a role in mitochondrial metabolism via an as yet unclear mechanism. Originally, this mitochondrial protein was thought to act as a proton transmembrane transporter from the mitochondrial intermembrane space into the matrix, causing proton leaks through the inner mitochondrial membrane, thereby uncoupling mitochondrial membrane potential generation from ATP synthesis. However, this function is controversial and uncoupling may not be the function, or at least not the main function, but rather a consequence of more conventional metabolite transporter activity. The chain is Putative mitochondrial transporter UCP3 from Sus scrofa (Pig).